The sequence spans 58 residues: Arabinogalactan protein 21 (58 aa).

The first 24 residues, 1 to 24, serve as a signal peptide directing secretion; it reads MEAMKMKMMVFIMVVAVAFSAATA. Pro30, Pro32, and Pro34 each carry 4-hydroxyproline. O-linked (Ara...) hydroxyproline glycosylation is found at Pro30, Pro32, and Pro34. The GPI-anchor amidated serine moiety is linked to residue Ser36. A propeptide spans 37-58 (removed in mature form); sequence DAAMFVPALFASVVALASGFIF.

Belongs to the AG-peptide AGP family. Contains 4-hydroxyproline; hydroxylated on Pro-30, Pro-32 and Pro-34. Post-translationally, O-glycosylated on hydroxyprolines; noncontiguous hydroxylproline residues are glycosylated with arabinogalactan.

The protein localises to the cell membrane. Functionally, proteoglycan that seems to be implicated in diverse developmental roles such as differentiation, cell-cell recognition, embryogenesis and programmed cell death. The polypeptide is Arabinogalactan protein 21 (Arabidopsis thaliana (Mouse-ear cress)).